A 436-amino-acid polypeptide reads, in one-letter code: MKRRRKDLKQAAESEQEECQSIAQVVSLGDSDQIQPPPNKKEEEDICEYLLQNFDLDHVMEILMRFPLTSLTRFKCVSKQWSSLISSRYFCNLLYTTVTRQQPRLYMCLKDDGGHRVLLSISSPSRGNTSFVVVEQDLSIPGMGGFFLNVVRGLMCFSRRKKARIYNPSTKQLLTLPAIKSDIVAQQGQTKHHPRYYIGHDPVSDQYKLVCTVAISSLLPRLGNLKSEHWVFALEAGGSWKKVVPLENYRHHAPSTEGRSTSGSVVRYMAWPDNYNCVVVSFDIRSEQLTIIPVPREIHLDEVVPAVTMMADLIEYGGKIAIFYHTNLKDEGSADLWVLEDTGKSEWSKKTLVLQPCQRHLVEDIELIVKGTTQDGKVILAPVEMHSRFYILYYNLQSNDLRKVEIKGVPDSWFDKECYFDLNSMDKSESFIYLET.

One can recognise an F-box domain in the interval 48-98 (EYLLQNFDLDHVMEILMRFPLTSLTRFKCVSKQWSSLISSRYFCNLLYTTV). LRR repeat units lie at residues 276–301 (NCVV…IHLD) and 393–416 (YYNL…WFDK).

The protein is F-box/LRR-repeat protein At2g40920 of Arabidopsis thaliana (Mouse-ear cress).